Here is a 604-residue protein sequence, read N- to C-terminus: Kelch-like protein 15 (604 aa).

One can recognise a BTB domain in the interval 31-98 (LDVTLVIEDH…MYYGTIELSM (68 aa)). The region spanning 133–237 (CAEIMRLLDD…TPSSVFEKVK (105 aa)) is the BACK domain. Kelch repeat units lie at residues 328–379 (FVFL…VIGK), 381–426 (IYAV…VLNN), 428–473 (LFIT…NKSK), 489–542 (KLYV…VLDK), and 544–590 (IMVL…VCNL).

As to quaternary structure, homodimer. Dimerization does not affect PPP2R5B-binding, but is required for its proteasomal degradation. Interacts with CUL3. Directly interacts with PPP2R5B; this interaction leads to PPP2R5B proteasomal degradation. Interacts with RBBP8/CtIP; this interaction leads to RBBP8 proteasomal degradation. Interacts with PACMP micropeptide; interaction prevents ubiquitination and degradation of RBBP8/CtIP.

It localises to the nucleus. It participates in protein modification; protein ubiquitination. Substrate-specific adapter for CUL3 E3 ubiquitin-protein ligase complex. Acts as an adapter for CUL3 to target the serine/threonine-protein phosphatase 2A (PP2A) subunit PPP2R5B for ubiquitination and subsequent proteasomal degradation, thus promoting exchange with other regulatory subunits and regulating PP2A holoenzyme composition. Acts as an adapter for CUL3 to target the DNA-end resection factor RBBP8/CtIP for ubiquitination and subsequent proteasomal degradation. Through the regulation of RBBP8/CtIP protein turnover, plays a key role in DNA damage response, favoring DNA double-strand repair through error-prone non-homologous end joining (NHEJ) over error-free, RBBP8-mediated homologous recombination (HR). This is Kelch-like protein 15 (Klhl15) from Mus musculus (Mouse).